The primary structure comprises 109 residues: Large ribosomal subunit protein P1 (109 aa).

The interval 90 to 109 (AAAKKEEEEEDDDMGFGLFD) is disordered.

Belongs to the eukaryotic ribosomal protein P1/P2 family. In terms of assembly, P1 and P2 exist as dimers at the large ribosomal subunit.

Functionally, plays an important role in the elongation step of protein synthesis. This chain is Large ribosomal subunit protein P1, found in Trypanosoma cruzi.